Consider the following 311-residue polypeptide: Methionyl-tRNA formyltransferase (311 aa).

110–113 (SLLP) serves as a coordination point for (6S)-5,6,7,8-tetrahydrofolate.

The protein belongs to the Fmt family.

The enzyme catalyses L-methionyl-tRNA(fMet) + (6R)-10-formyltetrahydrofolate = N-formyl-L-methionyl-tRNA(fMet) + (6S)-5,6,7,8-tetrahydrofolate + H(+). Its function is as follows. Attaches a formyl group to the free amino group of methionyl-tRNA(fMet). The formyl group appears to play a dual role in the initiator identity of N-formylmethionyl-tRNA by promoting its recognition by IF2 and preventing the misappropriation of this tRNA by the elongation apparatus. This chain is Methionyl-tRNA formyltransferase, found in Streptococcus pyogenes serotype M12 (strain MGAS2096).